Here is a 262-residue protein sequence, read N- to C-terminus: MAVGKNKRISKGRKGGKKKAVDPFSKKDWYDVKAPSIFTHRNVGKTLVSRTQGTKIASEGLKHRVFEVSLADLQGDEDNAYRKIRLRAEDVQGRNVLCQFWGMDFTTDKLRSLVKKWQTLIEAHVDVKTTDSYTLRLFCIAFTKRRANQVKRTCYAQSSQIRQIRRKMRDIMVREASSCDLKDLVAKFIPEAIGREIEKATQGIYPLQNVFIRKVKILKAPKFDLGKLMDVHGDYSAEDVGVKVDRPADEMAVEEPTEIIGA.

Positions 1–18 are enriched in basic residues; sequence MAVGKNKRISKGRKGGKK. The disordered stretch occupies residues 1 to 21; that stretch reads MAVGKNKRISKGRKGGKKKAV.

The protein belongs to the eukaryotic ribosomal protein eS1 family. As to quaternary structure, component of the small ribosomal subunit. Mature ribosomes consist of a small (40S) and a large (60S) subunit. The 40S subunit contains about 33 different proteins and 1 molecule of RNA (18S). The 60S subunit contains about 49 different proteins and 3 molecules of RNA (25S, 5.8S and 5S).

It localises to the cytoplasm. This Arabidopsis thaliana (Mouse-ear cress) protein is Small ribosomal subunit protein eS1z.